We begin with the raw amino-acid sequence, 794 residues long: Lon protease (794 aa).

The Lon N-terminal domain maps to 13–204 (VPLYPLREII…KVYMHLTNEV (192 aa)). ATP is bound at residue 356-363 (GPPGVGKT). A Lon proteolytic domain is found at 592 to 773 (KDRVGVATGL…REVFVQALNP (182 aa)). Catalysis depends on residues Ser-679 and Lys-722. Positions 774-788 (TSPAPTAATSARTPA) are enriched in low complexity. Residues 774-794 (TSPAPTAATSARTPAGAPPPQ) form a disordered region.

Belongs to the peptidase S16 family. As to quaternary structure, homohexamer. Organized in a ring with a central cavity.

The protein localises to the cytoplasm. It catalyses the reaction Hydrolysis of proteins in presence of ATP.. ATP-dependent serine protease that mediates the selective degradation of mutant and abnormal proteins as well as certain short-lived regulatory proteins. Required for cellular homeostasis and for survival from DNA damage and developmental changes induced by stress. Degrades polypeptides processively to yield small peptide fragments that are 5 to 10 amino acids long. Binds to DNA in a double-stranded, site-specific manner. In Citrifermentans bemidjiense (strain ATCC BAA-1014 / DSM 16622 / JCM 12645 / Bem) (Geobacter bemidjiensis), this protein is Lon protease.